The primary structure comprises 1173 residues: Pleckstrin homology domain-containing family A member 6 (1173 aa).

Residues 1–22 (MSNKTGGKRSATINSDIANHNM) show a composition bias toward polar residues. The segment at 1–39 (MSNKTGGKRSATINSDIANHNMVSEVPPERPNIRATRTS) is disordered. One can recognise a PH domain in the interval 59–158 (PVTKAGWLYK…WIQAMGEAAR (100 aa)). The interval 163–346 (PAQKSVPQPV…PSRFYPMPRR (184 aa)) is disordered. Positions 201–233 (LEPEAKTRGEGDGRGCEKAERRPERPEVKKETL) are enriched in basic and acidic residues. 2 positions are modified to phosphoserine: Ser247 and Ser251. Composition is skewed to polar residues over residues 270–281 (NGWQYSSPSRPG) and 311–322 (RKSSMNQLQQWV). Phosphoserine is present on residues Ser314, Ser459, Ser461, and Ser472. Tyr492 is modified (phosphotyrosine). At Ser665 the chain carries Phosphoserine. 2 disordered regions span residues 737–872 (RKNN…PRDI) and 888–984 (ALNK…RPAY). Low complexity-rich tracts occupy residues 761 to 782 (SSNS…SPFS) and 789 to 799 (GSPTKPGSSEE). A compositionally biased stretch (pro residues) spans 815–824 (ESPPTVPPLP). The residue at position 864 (Ser864) is a Phosphoserine. Thr868 carries the phosphothreonine modification. Residue Ser901 is modified to Phosphoserine. The residue at position 908 (Thr908) is a Phosphothreonine. Residues 915–926 (RTTNGLTNGLSS) are compositionally biased toward polar residues. Position 925 is a phosphoserine (Ser925). The span at 940–952 (GKVKMSVEEQMDR) shows a compositional bias: basic and acidic residues. The span at 953–967 (MRRHQSGSMKEKRRS) shows a compositional bias: basic residues. Phosphoserine is present on residues Ser973, Ser979, and Ser992. Position 1045 is a phosphothreonine (Thr1045). Ser1065 is modified (phosphoserine). Disordered stretches follow at residues 1093–1114 (PIGE…QEQE) and 1130–1173 (RGRM…TMRV). Phosphothreonine is present on Thr1140. Over residues 1141–1155 (PSPPTSPASPTPPVN) the composition is skewed to pro residues. Ser1142 carries the phosphoserine modification. Residue Thr1145 is modified to Phosphothreonine. Residues Ser1146 and Ser1149 each carry the phosphoserine modification. Phosphothreonine is present on Thr1151.

In Mus musculus (Mouse), this protein is Pleckstrin homology domain-containing family A member 6 (Plekha6).